We begin with the raw amino-acid sequence, 307 residues long: Glycerol-3-phosphate dehydrogenase [NAD(P)+] (307 aa).

NADPH-binding residues include W14, R34, R35, and K82. The sn-glycerol 3-phosphate site is built by K82 and G110. An NADPH-binding site is contributed by S114. Sn-glycerol 3-phosphate-binding residues include K165, D218, S228, R229, and N230. The Proton acceptor role is filled by K165. Residue R229 coordinates NADPH. E255 is a binding site for NADPH.

The protein belongs to the NAD-dependent glycerol-3-phosphate dehydrogenase family.

It localises to the cytoplasm. The catalysed reaction is sn-glycerol 3-phosphate + NAD(+) = dihydroxyacetone phosphate + NADH + H(+). It carries out the reaction sn-glycerol 3-phosphate + NADP(+) = dihydroxyacetone phosphate + NADPH + H(+). It participates in membrane lipid metabolism; glycerophospholipid metabolism. Catalyzes the reduction of the glycolytic intermediate dihydroxyacetone phosphate (DHAP) to sn-glycerol 3-phosphate (G3P), the key precursor for phospholipid synthesis. The polypeptide is Glycerol-3-phosphate dehydrogenase [NAD(P)+] (Nostoc sp. (strain PCC 7120 / SAG 25.82 / UTEX 2576)).